A 475-amino-acid chain; its full sequence is Ribulose bisphosphate carboxylase large chain (475 aa).

Positions M1–S2 are excised as a propeptide. N-acetylproline is present on P3. K14 carries the N6,N6,N6-trimethyllysine modification. 2 residues coordinate substrate: N123 and T173. K175 (proton acceptor) is an active-site residue. K177 lines the substrate pocket. Mg(2+)-binding residues include K201, D203, and E204. N6-carboxylysine is present on K201. Residue H294 is the Proton acceptor of the active site. Substrate is bound by residues R295, H327, and S379.

Belongs to the RuBisCO large chain family. Type I subfamily. As to quaternary structure, heterohexadecamer of 8 large chains and 8 small chains; disulfide-linked. The disulfide link is formed within the large subunit homodimers. Requires Mg(2+) as cofactor. The disulfide bond which can form in the large chain dimeric partners within the hexadecamer appears to be associated with oxidative stress and protein turnover.

The protein resides in the plastid. The protein localises to the chloroplast. The catalysed reaction is 2 (2R)-3-phosphoglycerate + 2 H(+) = D-ribulose 1,5-bisphosphate + CO2 + H2O. It catalyses the reaction D-ribulose 1,5-bisphosphate + O2 = 2-phosphoglycolate + (2R)-3-phosphoglycerate + 2 H(+). In terms of biological role, ruBisCO catalyzes two reactions: the carboxylation of D-ribulose 1,5-bisphosphate, the primary event in carbon dioxide fixation, as well as the oxidative fragmentation of the pentose substrate in the photorespiration process. Both reactions occur simultaneously and in competition at the same active site. The protein is Ribulose bisphosphate carboxylase large chain of Pinus longaeva (Great Basin bristlecone pine).